The primary structure comprises 477 residues: Protein RdxB (477 aa).

The Cytoplasmic segment spans residues 1–29; sequence MTSPDTQTSSLYAKREPVFPKRVSGKFRS. The helical transmembrane segment at 30-50 threads the bilayer; sequence LKWWIMGVTLGIYYIAPWLRW. Residues 51–81 are Periplasmic-facing; it reads DRGPNLPDQAILVDLANRRFFFFMIEIWPHE. The helical transmembrane segment at 82-102 threads the bilayer; sequence FYFVAGLLIMAGLGLFLFTSA. Topologically, residues 103-154 are cytoplasmic; the sequence is AGRVWCGYACPQTVWTDLFILVERWVEGDRNARIRLLRQRWDLEKTRKYLTK. The chain crosses the membrane as a helical span at residues 155–175; the sequence is WTLWLLIGLATGGAWVFYFTD. Topologically, residues 176–189 are periplasmic; it reads APTLLVDLLTGNAH. The helical transmembrane segment at 190 to 210 threads the bilayer; it reads PVAYITMATLTATTFAFGGFA. At 211 to 338 the chain is on the cytoplasmic side; it reads REQICIYACP…SAWRHVFRLR (128 aa). The 4Fe-4S ferredoxin-type domain maps to 253 to 281; that stretch reads EPLSPDQGDCIDCMACVNVCPMGIDIRDG. Residues Cys262, Cys265, Cys268, Cys272, Cys286, Cys289, Cys292, and Cys296 each coordinate [4Fe-4S] cluster. A helical membrane pass occupies residues 339 to 359; it reads TLIYTALWSGVGLALIVALFL. The Periplasmic portion of the chain corresponds to 360 to 477; that stretch reads RSPIDINVTP…HDTIFNGRGN (118 aa).

[4Fe-4S] cluster is required as a cofactor.

The protein localises to the cell membrane. Functionally, involved in a membrane generated redox signal; required to maintain repression of photosynthesis gene expression in the presence of oxygen. This Cereibacter sphaeroides (strain ATCC 17023 / DSM 158 / JCM 6121 / CCUG 31486 / LMG 2827 / NBRC 12203 / NCIMB 8253 / ATH 2.4.1.) (Rhodobacter sphaeroides) protein is Protein RdxB (rdxB).